Consider the following 219-residue polypeptide: Thiopurine S-methyltransferase (219 aa).

Residues Trp10, Leu45, Glu66, and Arg123 each contribute to the S-adenosyl-L-methionine site.

The protein belongs to the class I-like SAM-binding methyltransferase superfamily. TPMT family.

The protein resides in the cytoplasm. It carries out the reaction S-adenosyl-L-methionine + a thiopurine = S-adenosyl-L-homocysteine + a thiopurine S-methylether.. The protein is Thiopurine S-methyltransferase of Shewanella pealeana (strain ATCC 700345 / ANG-SQ1).